The chain runs to 117 residues: MSDWIGVALFIVVGIVFGAGGMLTSFLIHPRSKNKFKLETYECGLPTEGATWVRFKTQYFTYALMFVIFDVEVIYLYPWAVSFVDLGLAGLIKMFLFIFILVLGLWYAWKEGALEWK.

Transmembrane regions (helical) follow at residues 4 to 24 (WIGV…GMLT), 64 to 84 (LMFV…VSFV), and 86 to 106 (LGLA…LGLW).

This sequence belongs to the complex I subunit 3 family. NDH-1 is composed of 14 different subunits. Subunits NuoA, H, J, K, L, M, N constitute the membrane sector of the complex.

The protein localises to the cell membrane. It carries out the reaction a quinone + NADH + 5 H(+)(in) = a quinol + NAD(+) + 4 H(+)(out). NDH-1 shuttles electrons from NADH, via FMN and iron-sulfur (Fe-S) centers, to quinones in the respiratory chain. The immediate electron acceptor for the enzyme in this species is believed to be a menaquinone. Couples the redox reaction to proton translocation (for every two electrons transferred, four hydrogen ions are translocated across the cytoplasmic membrane), and thus conserves the redox energy in a proton gradient. The protein is NADH-quinone oxidoreductase subunit A of Desulforamulus reducens (strain ATCC BAA-1160 / DSM 100696 / MI-1) (Desulfotomaculum reducens).